The sequence spans 76 residues: Sec-independent protein translocase protein TatA (76 aa).

A helical transmembrane segment spans residues methionine 1–glycine 21. The segment at methionine 43–alanine 76 is disordered. Positions asparagine 64–alanine 76 are enriched in basic and acidic residues.

It belongs to the TatA/E family. As to quaternary structure, the Tat system comprises two distinct complexes: a TatABC complex, containing multiple copies of TatA, TatB and TatC subunits, and a separate TatA complex, containing only TatA subunits. Substrates initially bind to the TatABC complex, which probably triggers association of the separate TatA complex to form the active translocon.

It is found in the cell inner membrane. Functionally, part of the twin-arginine translocation (Tat) system that transports large folded proteins containing a characteristic twin-arginine motif in their signal peptide across membranes. TatA could form the protein-conducting channel of the Tat system. The chain is Sec-independent protein translocase protein TatA from Burkholderia multivorans (strain ATCC 17616 / 249).